Reading from the N-terminus, the 387-residue chain is Type 2 DNA topoisomerase 6 subunit A (387 aa).

One can recognise a Topo IIA-type catalytic domain in the interval 12-160; that stretch reads EARKKALAVF…MLILSKEKGK (149 aa). Tyrosine 106 acts as the O-(5'-phospho-DNA)-tyrosine intermediate in catalysis. Residues glutamate 207 and aspartate 259 each coordinate Mg(2+).

Belongs to the TOP6A family. As to quaternary structure, homodimer. Heterotetramer of two Top6A and two Top6B chains. Mg(2+) serves as cofactor.

It catalyses the reaction ATP-dependent breakage, passage and rejoining of double-stranded DNA.. Functionally, relaxes both positive and negative superturns and exhibits a strong decatenase activity. The sequence is that of Type 2 DNA topoisomerase 6 subunit A from Hyperthermus butylicus (strain DSM 5456 / JCM 9403 / PLM1-5).